Consider the following 620-residue polypeptide: Chaperone protein HscA homolog (620 aa).

This sequence belongs to the heat shock protein 70 family.

Chaperone involved in the maturation of iron-sulfur cluster-containing proteins. Has a low intrinsic ATPase activity which is markedly stimulated by HscB. The protein is Chaperone protein HscA homolog of Shewanella baltica (strain OS195).